The chain runs to 159 residues: Transcription elongation factor GreA (159 aa).

This sequence belongs to the GreA/GreB family.

Functionally, necessary for efficient RNA polymerase transcription elongation past template-encoded arresting sites. The arresting sites in DNA have the property of trapping a certain fraction of elongating RNA polymerases that pass through, resulting in locked ternary complexes. Cleavage of the nascent transcript by cleavage factors such as GreA or GreB allows the resumption of elongation from the new 3'terminus. GreA releases sequences of 2 to 3 nucleotides. This Buchnera aphidicola subsp. Acyrthosiphon pisum (strain APS) (Acyrthosiphon pisum symbiotic bacterium) protein is Transcription elongation factor GreA.